The following is a 296-amino-acid chain: Maltose/maltodextrin transport system permease protein MalG (296 aa).

The Cytoplasmic segment spans residues 1–12 (MAMVQPKSQKWR). The chain crosses the membrane as a helical span at residues 13-35 (LLATHLLMFTFIAMILFPLLMVI). Over 36-88 (TISLRPGNFATGSLIPENISWEHWKLALGYSVVSPDGRVTPPPFPVMLWLWNS) the chain is Periplasmic. The region spanning 85-281 (LWNSVKVAFI…LPITIVFLVA (197 aa)) is the ABC transmembrane type-1 domain. The helical transmembrane segment at 89 to 111 (VKVAFITAVGIVTLSTTCAYAFA) threads the bilayer. Residues 112-123 (RMHFRGKSTLLK) lie on the Cytoplasmic side of the membrane. A helical membrane pass occupies residues 124-143 (GMLIFQMFPAVLSLVALYAL). Residues 144-152 (FDRLGEYVP) lie on the Periplasmic side of the membrane. A helical membrane pass occupies residues 153–175 (FIGLNTHGGVIFAYLGGIALHVW). The Cytoplasmic segment spans residues 176–205 (TIKGYFETIDGSLEEAAALDGATPWQAFRM). Residues 206-228 (VLLPLSVPILAVVFILSFIGVIT) traverse the membrane as a helical segment. Residues 229-257 (EVPVASLLLRDVNNYTLAVGMQQYLNPQN) are Periplasmic-facing. A helical transmembrane segment spans residues 258-280 (YLWGDFAAAAVLSALPITIVFLV). Residues 281–296 (AQRWLVSGLTAGGVKG) lie on the Cytoplasmic side of the membrane.

The protein belongs to the binding-protein-dependent transport system permease family. MalFG subfamily. In terms of assembly, the complex is composed of two ATP-binding proteins (MalK), two transmembrane proteins (MalG and MalF) and a solute-binding protein (MalE).

The protein localises to the cell inner membrane. In terms of biological role, part of the ABC transporter complex MalEFGK involved in maltose/maltodextrin import. Probably responsible for the translocation of the substrate across the membrane. The protein is Maltose/maltodextrin transport system permease protein MalG (malG) of Photorhabdus laumondii subsp. laumondii (strain DSM 15139 / CIP 105565 / TT01) (Photorhabdus luminescens subsp. laumondii).